A 383-amino-acid chain; its full sequence is Succinyl-diaminopimelate desuccinylase (383 aa).

His-74 serves as a coordination point for Zn(2+). Residue Asp-76 is part of the active site. Asp-107 is a Zn(2+) binding site. Glu-141 (proton acceptor) is an active-site residue. Residues Glu-142, Glu-170, and His-356 each coordinate Zn(2+).

Belongs to the peptidase M20A family. DapE subfamily. In terms of assembly, homodimer. The cofactor is Zn(2+). Co(2+) serves as cofactor.

The catalysed reaction is N-succinyl-(2S,6S)-2,6-diaminopimelate + H2O = (2S,6S)-2,6-diaminopimelate + succinate. The protein operates within amino-acid biosynthesis; L-lysine biosynthesis via DAP pathway; LL-2,6-diaminopimelate from (S)-tetrahydrodipicolinate (succinylase route): step 3/3. Catalyzes the hydrolysis of N-succinyl-L,L-diaminopimelic acid (SDAP), forming succinate and LL-2,6-diaminopimelate (DAP), an intermediate involved in the bacterial biosynthesis of lysine and meso-diaminopimelic acid, an essential component of bacterial cell walls. The polypeptide is Succinyl-diaminopimelate desuccinylase (Ralstonia nicotianae (strain ATCC BAA-1114 / GMI1000) (Ralstonia solanacearum)).